Reading from the N-terminus, the 118-residue chain is Mediator of RNA polymerase II transcription subunit 11 (118 aa).

This sequence belongs to the Mediator complex subunit 11 family. As to quaternary structure, component of the Mediator complex.

The protein resides in the nucleus. Functionally, component of the Mediator complex, a coactivator involved in the regulated transcription of nearly all RNA polymerase II-dependent genes. Mediator functions as a bridge to convey information from gene-specific regulatory proteins to the basal RNA polymerase II transcription machinery. Mediator is recruited to promoters by direct interactions with regulatory proteins and serves as a scaffold for the assembly of a functional pre-initiation complex with RNA polymerase II and the general transcription factors. The sequence is that of Mediator of RNA polymerase II transcription subunit 11 (med11) from Xenopus tropicalis (Western clawed frog).